Consider the following 308-residue polypeptide: GTP-binding protein RAD (308 aa).

The span at 1–16 (MTLNGGGSGAGGSRGG) shows a compositional bias: gly residues. Residues 1-88 (MTLNGGGSGA…SLSSGGSDSD (88 aa)) are disordered. Arginine 24 is subject to Omega-N-methylarginine. Serine 26 carries the phosphoserine modification. Low complexity predominate over residues 48–68 (QAALTPGALTAAAAGTGTQGP). GTP is bound by residues 98–105 (GAPGVGKS) and 203–206 (NKSD). A calmodulin-binding region spans residues 278 to 297 (AKRFLGRIVARNSRKMAFRA).

Belongs to the small GTPase superfamily. RGK family. Interacts with calmodulin preferentially in the inactive, GDP-bound form. Binds CAMKII which is capable of phosphorylating RAD in vitro. Interacts with CAMK2D. Interacts with CACNB2; interaction may be involved in beta-adrenergic regulation of heart rate and contractile force. Interaction with CACNB2 regulates the trafficking of CACNA1C to the cell membrane. As to expression, most abundantly expressed in the heart. Also found in the skeletal muscle and lung. Lesser amounts in placenta and kidney. Also detected in adipose tissue. Overexpressed in muscle of type II diabetic humans.

It is found in the cell membrane. May regulate basal voltage-dependent L-type Ca(2+) currents and be required for beta-adrenergic augmentation of Ca(2+) influx in cardiomyocytes, thereby regulating increases in heart rate and contractile force. May play an important role in cardiac antiarrhythmia via the strong suppression of voltage-gated L-type Ca(2+) currents. Regulates voltage-dependent L-type calcium channel subunit alpha-1C trafficking to the cell membrane. Inhibits cardiac hypertrophy through the calmodulin-dependent kinase II (CaMKII) pathway. Inhibits phosphorylation and activation of CAMK2D. This Homo sapiens (Human) protein is GTP-binding protein RAD (RRAD).